The primary structure comprises 240 residues: Ribosomal RNA large subunit methyltransferase E (240 aa).

The segment covering 1-20 has biased composition (gly residues); it reads MSKAGGNKGGVKTGGRGGAG. Positions 1–27 are disordered; the sequence is MSKAGGNKGGVKTGGRGGAGSSNLQVR. S-adenosyl-L-methionine is bound by residues G92, W94, D115, D131, and D155. Catalysis depends on K195, which acts as the Proton acceptor.

It belongs to the class I-like SAM-binding methyltransferase superfamily. RNA methyltransferase RlmE family.

It is found in the cytoplasm. It carries out the reaction uridine(2552) in 23S rRNA + S-adenosyl-L-methionine = 2'-O-methyluridine(2552) in 23S rRNA + S-adenosyl-L-homocysteine + H(+). Its function is as follows. Specifically methylates the uridine in position 2552 of 23S rRNA at the 2'-O position of the ribose in the fully assembled 50S ribosomal subunit. The protein is Ribosomal RNA large subunit methyltransferase E of Brucella anthropi (strain ATCC 49188 / DSM 6882 / CCUG 24695 / JCM 21032 / LMG 3331 / NBRC 15819 / NCTC 12168 / Alc 37) (Ochrobactrum anthropi).